We begin with the raw amino-acid sequence, 83 residues long: ATP synthase subunit c, chloroplastic (83 aa).

The next 2 membrane-spanning stretches (helical) occupy residues Pro-3–Gly-23 and Leu-57–Ala-77.

The protein belongs to the ATPase C chain family. In terms of assembly, F-type ATPases have 2 components, F(1) - the catalytic core - and F(0) - the membrane proton channel. F(1) has five subunits: alpha(3), beta(3), gamma(1), delta(1), epsilon(1). F(0) has four main subunits: a(1), b(1), b'(1) and c(10-14). The alpha and beta chains form an alternating ring which encloses part of the gamma chain. F(1) is attached to F(0) by a central stalk formed by the gamma and epsilon chains, while a peripheral stalk is formed by the delta, b and b' chains.

Its subcellular location is the plastid. The protein localises to the chloroplast thylakoid membrane. F(1)F(0) ATP synthase produces ATP from ADP in the presence of a proton or sodium gradient. F-type ATPases consist of two structural domains, F(1) containing the extramembraneous catalytic core and F(0) containing the membrane proton channel, linked together by a central stalk and a peripheral stalk. During catalysis, ATP synthesis in the catalytic domain of F(1) is coupled via a rotary mechanism of the central stalk subunits to proton translocation. Its function is as follows. Key component of the F(0) channel; it plays a direct role in translocation across the membrane. A homomeric c-ring of between 10-14 subunits forms the central stalk rotor element with the F(1) delta and epsilon subunits. This is ATP synthase subunit c, chloroplastic from Diacronema lutheri (Unicellular marine alga).